We begin with the raw amino-acid sequence, 590 residues long: L-erythrulose kinase (590 aa).

Residues 7–331 form the DhaK domain; it reads QPSSFARELT…WRAPADAPAF (325 aa). Histidine 217 acts as the Tele-hemiaminal-histidine intermediate in catalysis. One can recognise a DhaL domain in the interval 366 to 568; sequence HCVAAALNAA…LAMILDAVSA (203 aa). ADP is bound by residues 398–401, 441–442, glycine 483, arginine 540, and 553–555; these read HGIG, TS, and DAG.

It carries out the reaction L-erythrulose + ATP = L-erythrulose 1-phosphate + ADP + H(+). It functions in the pathway carbohydrate metabolism. Involved in catabolism of D-apiose. Catalyzes the phosphorylation of L-erythrulose to L-erythrulose 1-phosphate. Can also phosphorylate D-erythrulose and dihydroxyacetone in vitro. In Pectobacterium atrosepticum (strain SCRI 1043 / ATCC BAA-672) (Erwinia carotovora subsp. atroseptica), this protein is L-erythrulose kinase.